Reading from the N-terminus, the 307-residue chain is Pyridoxal 5'-phosphate synthase subunit PdxS (307 aa).

A compositionally biased stretch (basic residues) spans 1–10 (MRGQPRPKLR). The interval 1-20 (MRGQPRPKLRRMTEQQTGTP) is disordered. Asp37 contacts D-ribose 5-phosphate. The active-site Schiff-base intermediate with D-ribose 5-phosphate is Lys94. Gly166 serves as a coordination point for D-ribose 5-phosphate. Arg178 lines the D-glyceraldehyde 3-phosphate pocket. Residues Gly227 and 248 to 249 (GS) each bind D-ribose 5-phosphate.

Belongs to the PdxS/SNZ family. In the presence of PdxT, forms a dodecamer of heterodimers.

The enzyme catalyses aldehydo-D-ribose 5-phosphate + D-glyceraldehyde 3-phosphate + L-glutamine = pyridoxal 5'-phosphate + L-glutamate + phosphate + 3 H2O + H(+). The protein operates within cofactor biosynthesis; pyridoxal 5'-phosphate biosynthesis. Its function is as follows. Catalyzes the formation of pyridoxal 5'-phosphate from ribose 5-phosphate (RBP), glyceraldehyde 3-phosphate (G3P) and ammonia. The ammonia is provided by the PdxT subunit. Can also use ribulose 5-phosphate and dihydroxyacetone phosphate as substrates, resulting from enzyme-catalyzed isomerization of RBP and G3P, respectively. The sequence is that of Pyridoxal 5'-phosphate synthase subunit PdxS from Deinococcus radiodurans (strain ATCC 13939 / DSM 20539 / JCM 16871 / CCUG 27074 / LMG 4051 / NBRC 15346 / NCIMB 9279 / VKM B-1422 / R1).